Reading from the N-terminus, the 236-residue chain is tRNA (guanine-N(1)-)-methyltransferase (236 aa).

Residues Gly-116 and 136–141 each bind S-adenosyl-L-methionine; that span reads LGDFVL.

This sequence belongs to the RNA methyltransferase TrmD family. In terms of assembly, homodimer.

The protein resides in the cytoplasm. It catalyses the reaction guanosine(37) in tRNA + S-adenosyl-L-methionine = N(1)-methylguanosine(37) in tRNA + S-adenosyl-L-homocysteine + H(+). In terms of biological role, specifically methylates guanosine-37 in various tRNAs. This Thiobacillus denitrificans (strain ATCC 25259 / T1) protein is tRNA (guanine-N(1)-)-methyltransferase.